A 173-amino-acid chain; its full sequence is Adenine phosphoribosyltransferase (173 aa).

It belongs to the purine/pyrimidine phosphoribosyltransferase family. Homodimer.

The protein resides in the cytoplasm. It carries out the reaction AMP + diphosphate = 5-phospho-alpha-D-ribose 1-diphosphate + adenine. It participates in purine metabolism; AMP biosynthesis via salvage pathway; AMP from adenine: step 1/1. Catalyzes a salvage reaction resulting in the formation of AMP, that is energically less costly than de novo synthesis. The polypeptide is Adenine phosphoribosyltransferase (Desulfosudis oleivorans (strain DSM 6200 / JCM 39069 / Hxd3) (Desulfococcus oleovorans)).